The following is a 942-amino-acid chain: Valine--tRNA ligase (942 aa).

The 'HIGH' region signature appears at 43–53 (PNVTGTLHMGH). Residues 551 to 555 (KMSKS) carry the 'KMSKS' region motif. Lysine 554 serves as a coordination point for ATP. Residues 876-942 (EGLVDLDAER…AGLREQRAKL (67 aa)) adopt a coiled-coil conformation.

Belongs to the class-I aminoacyl-tRNA synthetase family. ValS type 1 subfamily. Monomer.

Its subcellular location is the cytoplasm. The catalysed reaction is tRNA(Val) + L-valine + ATP = L-valyl-tRNA(Val) + AMP + diphosphate. Functionally, catalyzes the attachment of valine to tRNA(Val). As ValRS can inadvertently accommodate and process structurally similar amino acids such as threonine, to avoid such errors, it has a 'posttransfer' editing activity that hydrolyzes mischarged Thr-tRNA(Val) in a tRNA-dependent manner. The sequence is that of Valine--tRNA ligase from Stenotrophomonas maltophilia (strain K279a).